We begin with the raw amino-acid sequence, 414 residues long: MSGIIATYLIHDDSHNLEKKAEQIALGLTIGSWTHLPHLLQEQLKQHKGNVIHVEELAEHEHTNSYLRKKVKRGIIKIEYPLLNFSPDLPAILTTTFGKLSLDGEVKLIDLTFSDELKKHFPGPKFGIDGIRNLLQVHDRPLLMSIFKGMIGRNIGYLKTQLRDQAIGGVDIVKDDEILFENALTPLTKRIVSGKEVLQSVYETYGHKTLYAVNLTGRTFDLKENAKRAVQAGADILLFNVFSYGLDVLQSLAEDDEIPVPIMAHPAVSGAYSASKLYGVSSPLLLGKLLRYAGADFSLFPSPYGSVALEKEEALAISKYLTEDDAFFKKSFSVPSAGIHPGFVPFIVRDFGKDVVINAGGGIHGHPNGAQGGGKAFRAAIDATLQNKPLHEVDDINLHSALQIWGNPSHEVKL.

Residue lysine 99 is the Proton acceptor of the active site. Residues lysine 148, lysine 174–glutamate 177, histidine 265, glycine 338, and glycine 360–glycine 361 each bind substrate. Mg(2+) is bound by residues lysine 174, aspartate 176, and glutamate 177. An N6-carboxylysine modification is found at lysine 174.

This sequence belongs to the RuBisCO large chain family. Type IV subfamily. Homodimer. Requires Mg(2+) as cofactor.

It catalyses the reaction 5-methylsulfanyl-2,3-dioxopentyl phosphate = 2-hydroxy-5-methylsulfanyl-3-oxopent-1-enyl phosphate. The protein operates within amino-acid biosynthesis; L-methionine biosynthesis via salvage pathway; L-methionine from S-methyl-5-thio-alpha-D-ribose 1-phosphate: step 3/6. Its function is as follows. Catalyzes the enolization of 2,3-diketo-5-methylthiopentyl-1-phosphate (DK-MTP-1-P) into 2-hydroxy-3-keto-5-methylthiopentenyl-1-phosphate (HK-MTPenyl-1-P). This chain is 2,3-diketo-5-methylthiopentyl-1-phosphate enolase, found in Bacillus cereus (strain AH187).